A 281-amino-acid chain; its full sequence is Diphthine methyl ester synthase (281 aa).

S-adenosyl-L-methionine-binding positions include leucine 9, aspartate 84, glycine 87, 112 to 113 (SI), and leucine 163. Serine 171 carries the phosphoserine modification. S-adenosyl-L-methionine contacts are provided by valine 225 and histidine 250.

This sequence belongs to the diphthine synthase family.

It catalyses the reaction 2-[(3S)-amino-3-carboxypropyl]-L-histidyl-[translation elongation factor 2] + 4 S-adenosyl-L-methionine = diphthine methyl ester-[translation elongation factor 2] + 4 S-adenosyl-L-homocysteine + 3 H(+). It functions in the pathway protein modification; peptidyl-diphthamide biosynthesis. Its function is as follows. S-adenosyl-L-methionine-dependent methyltransferase that catalyzes four methylations of the modified target histidine residue in translation elongation factor 2 (EF-2), to form an intermediate called diphthine methyl ester. The four successive methylation reactions represent the second step of diphthamide biosynthesis. This chain is Diphthine methyl ester synthase (Dph5), found in Mus musculus (Mouse).